We begin with the raw amino-acid sequence, 188 residues long: MSAGKRSAAGSARSDTATSTVDLHASLLPLAFLVGTWRGEGVGGYEGLDGFHYGQEITFAADGRPALGYVSHTWWADEPRDGREPGSPLATETGFWRVQPGEDGKPVVEVMLAHPFGIAEIYVGTVTGTRIDLDHNVLIRTATARDVTRSVRLYGLVEGCDLAYAIDMEAEGKPMQSHLSARLHRVSD.

The GXWXGXG signature appears at Gly35–Gly41. His178 contacts heme b.

This sequence belongs to the nitrobindin family. In terms of assembly, homodimer. Heme b serves as cofactor.

It catalyses the reaction peroxynitrite = nitrate. It functions in the pathway nitrogen metabolism. Its function is as follows. Heme-binding protein able to scavenge peroxynitrite and to protect free L-tyrosine against peroxynitrite-mediated nitration, by acting as a peroxynitrite isomerase that converts peroxynitrite to nitrate. Therefore, this protein likely plays a role in peroxynitrite sensing and in the detoxification of reactive nitrogen and oxygen species (RNS and ROS, respectively). Is able to bind nitric oxide (NO) in vitro, but may act as a sensor of peroxynitrite levels in vivo. In Frankia casuarinae (strain DSM 45818 / CECT 9043 / HFP020203 / CcI3), this protein is Peroxynitrite isomerase.